A 648-amino-acid polypeptide reads, in one-letter code: Macrolide export ATP-binding/permease protein MacB (648 aa).

In terms of domain architecture, ABC transporter spans 5-243; the sequence is LELCNVSRSY…QGVDAAVVNT (239 aa). Residue 41–48 coordinates ATP; sequence GVSGSGKS. 5 consecutive transmembrane segments (helical) span residues 273–293, 417–437, 523–543, 577–597, and 611–631; these read LLTM…VVVG, ANVV…IGVA, LFLT…VMNI, VLVC…IAFM, and LTAL…FGWL.

This sequence belongs to the ABC transporter superfamily. Macrolide exporter (TC 3.A.1.122) family. Homodimer. Part of the tripartite efflux system MacAB-TolC, which is composed of an inner membrane transporter, MacB, a periplasmic membrane fusion protein, MacA, and an outer membrane component, TolC. The complex forms a large protein conduit and can translocate molecules across both the inner and outer membranes. Interacts with MacA.

It localises to the cell inner membrane. In terms of biological role, part of the tripartite efflux system MacAB-TolC. MacB is a non-canonical ABC transporter that contains transmembrane domains (TMD), which form a pore in the inner membrane, and an ATP-binding domain (NBD), which is responsible for energy generation. Confers resistance against macrolides. This is Macrolide export ATP-binding/permease protein MacB from Salmonella choleraesuis (strain SC-B67).